A 383-amino-acid chain; its full sequence is Galactokinase (383 aa).

34–37 lines the substrate pocket; it reads EHTD. 124–130 serves as a coordination point for ATP; the sequence is GAGLSSS. Residues serine 130 and glutamate 162 each coordinate Mg(2+). Aspartate 174 functions as the Proton acceptor in the catalytic mechanism. Tyrosine 223 is a binding site for substrate.

The protein belongs to the GHMP kinase family. GalK subfamily.

The protein resides in the cytoplasm. It carries out the reaction alpha-D-galactose + ATP = alpha-D-galactose 1-phosphate + ADP + H(+). The protein operates within carbohydrate metabolism; galactose metabolism. Its function is as follows. Catalyzes the transfer of the gamma-phosphate of ATP to D-galactose to form alpha-D-galactose-1-phosphate (Gal-1-P). In Yersinia pseudotuberculosis serotype IB (strain PB1/+), this protein is Galactokinase.